Reading from the N-terminus, the 63-residue chain is Large ribosomal subunit protein bL28c (63 aa).

The protein belongs to the bacterial ribosomal protein bL28 family.

It localises to the plastid. Its subcellular location is the chloroplast. This Pyropia yezoensis (Susabi-nori) protein is Large ribosomal subunit protein bL28c.